Here is a 643-residue protein sequence, read N- to C-terminus: Galactan 5-O-arabinofuranosyltransferase (643 aa).

13 consecutive transmembrane segments (helical) span residues Val25 to Val45, Ala66 to Trp86, Leu97 to Ala117, Phe180 to Trp200, Phe205 to Pro225, Ala229 to Ala249, Trp255 to Tyr272, Val276 to Ser293, Leu309 to Leu329, Phe355 to Val375, Ala384 to Ala404, Leu420 to Gly440, and Gly445 to Ile465. The Extracellular segment spans residues Pro466–Ala643.

The protein belongs to the glycosyltransferase 85 family.

The protein resides in the cell membrane. It carries out the reaction Adds an alpha-D-arabinofuranosyl group from trans,octacis-decaprenylphospho-beta-D-arabinofuranose at the 5-O-position of the eighth, tenth and twelfth galactofuranose unit of the galactofuranan chain of [beta-D-galactofuranosyl-(1-&gt;5)-beta-D-galactofuranosyl-(1-&gt;6)]14-beta-D-galactofuranosyl-(1-&gt;5)-beta-D-galactofuranosyl-(1-&gt;4)-alpha-L-rhamnopyranosyl-(1-&gt;3)-N-acetyl-alpha-D-glucosaminyl-diphospho-trans,octacis-decaprenol.. It functions in the pathway cell wall biogenesis; cell wall polysaccharide biosynthesis. Its function is as follows. Involved in the biosynthesis of the arabinogalactan (AG) region of the mycolylarabinogalactan-peptidoglycan (mAGP) complex, an essential component of the mycobacterial cell wall. Catalyzes the addition of the first key arabinofuranosyl (Araf) residue from the sugar donor decaprenyl-phospho-arabinose (DPA) on the C-5 of a 6-linked galactofuranosyl (Galf) of the galactan domain, thus 'priming' the galactan for further elaboration by other arabinofuranosyltransferases. It is not able to add an Araf residue to a terminal Galf. The polypeptide is Galactan 5-O-arabinofuranosyltransferase (Mycobacterium tuberculosis (strain CDC 1551 / Oshkosh)).